The sequence spans 404 residues: Multidrug resistance protein MdtG (404 aa).

11 helical membrane-spanning segments follow: residues 19-39 (LGCF…PLYV), 56-76 (LVFS…GGLA), 90-110 (LGMA…QFLI), 113-133 (ALLG…ATQV), 144-164 (TLST…GLLA), 171-191 (PVFF…FFFI), 222-242 (LFVT…ILTL), 254-274 (IAFI…LSAP), 288-308 (ILIV…FVQT), 317-337 (FLLG…LVYN), and 376-396 (AVFC…WNSL).

Belongs to the major facilitator superfamily. DHA1 family. MdtG (TC 2.A.1.2.20) subfamily.

It is found in the cell inner membrane. This Salmonella choleraesuis (strain SC-B67) protein is Multidrug resistance protein MdtG.